We begin with the raw amino-acid sequence, 289 residues long: UTP--glucose-1-phosphate uridylyltransferase 2 (289 aa).

This sequence belongs to the UDPGP type 2 family.

It catalyses the reaction alpha-D-glucose 1-phosphate + UTP + H(+) = UDP-alpha-D-glucose + diphosphate. Its pathway is glycolipid metabolism; diglucosyl-diacylglycerol biosynthesis. Catalyzes the formation of UDP-glucose from glucose-1-phosphate and UTP. This is an intermediate step in the biosynthesis of diglucosyl-diacylglycerol (Glc2-DAG), i.e. a glycolipid found in the membrane, which is also used as a membrane anchor for lipoteichoic acid (LTA). This is UTP--glucose-1-phosphate uridylyltransferase 2 (gtaB2) from Staphylococcus saprophyticus subsp. saprophyticus (strain ATCC 15305 / DSM 20229 / NCIMB 8711 / NCTC 7292 / S-41).